The primary structure comprises 298 residues: Porphobilinogen deaminase (298 aa).

An S-(dipyrrolylmethanemethyl)cysteine modification is found at Cys-239.

It belongs to the HMBS family. Monomer. The cofactor is dipyrromethane.

The catalysed reaction is 4 porphobilinogen + H2O = hydroxymethylbilane + 4 NH4(+). It participates in porphyrin-containing compound metabolism; protoporphyrin-IX biosynthesis; coproporphyrinogen-III from 5-aminolevulinate: step 2/4. Tetrapolymerization of the monopyrrole PBG into the hydroxymethylbilane pre-uroporphyrinogen in several discrete steps. This chain is Porphobilinogen deaminase, found in Orientia tsutsugamushi (strain Boryong) (Rickettsia tsutsugamushi).